The sequence spans 423 residues: Gamma-glutamyl phosphate reductase 2 (423 aa).

The protein belongs to the gamma-glutamyl phosphate reductase family.

It is found in the cytoplasm. It carries out the reaction L-glutamate 5-semialdehyde + phosphate + NADP(+) = L-glutamyl 5-phosphate + NADPH + H(+). Its pathway is amino-acid biosynthesis; L-proline biosynthesis; L-glutamate 5-semialdehyde from L-glutamate: step 2/2. Functionally, catalyzes the NADPH-dependent reduction of L-glutamate 5-phosphate into L-glutamate 5-semialdehyde and phosphate. The product spontaneously undergoes cyclization to form 1-pyrroline-5-carboxylate. This Bacillus licheniformis (strain ATCC 14580 / DSM 13 / JCM 2505 / CCUG 7422 / NBRC 12200 / NCIMB 9375 / NCTC 10341 / NRRL NRS-1264 / Gibson 46) protein is Gamma-glutamyl phosphate reductase 2.